The sequence spans 219 residues: ATP-dependent Clp protease proteolytic subunit 1, mitochondrial (219 aa).

The N-terminal 23 residues, 1–23 (MLRRILTTSSVRNLTSSTQARVG), are a transit peptide targeting the mitochondrion. Ser118 functions as the Nucleophile in the catalytic mechanism. His143 is an active-site residue.

It belongs to the peptidase S14 family. Tetradecamer that assembles into a two heptameric rings with a central cavity.

The protein resides in the mitochondrion matrix. The catalysed reaction is Hydrolysis of proteins to small peptides in the presence of ATP and magnesium. alpha-casein is the usual test substrate. In the absence of ATP, only oligopeptides shorter than five residues are hydrolyzed (such as succinyl-Leu-Tyr-|-NHMec, and Leu-Tyr-Leu-|-Tyr-Trp, in which cleavage of the -Tyr-|-Leu- and -Tyr-|-Trp bonds also occurs).. Functionally, clp cleaves peptides in various proteins in a process that requires ATP hydrolysis. Clp may be responsible for a fairly general and central housekeeping function rather than for the degradation of specific substrates. This is ATP-dependent Clp protease proteolytic subunit 1, mitochondrial from Caenorhabditis briggsae.